The following is a 544-amino-acid chain: Formate--tetrahydrofolate ligase (544 aa).

T63–S70 contributes to the ATP binding site.

The protein belongs to the formate--tetrahydrofolate ligase family.

It carries out the reaction (6S)-5,6,7,8-tetrahydrofolate + formate + ATP = (6R)-10-formyltetrahydrofolate + ADP + phosphate. Its pathway is one-carbon metabolism; tetrahydrofolate interconversion. The chain is Formate--tetrahydrofolate ligase from Fusobacterium nucleatum subsp. nucleatum (strain ATCC 25586 / DSM 15643 / BCRC 10681 / CIP 101130 / JCM 8532 / KCTC 2640 / LMG 13131 / VPI 4355).